Reading from the N-terminus, the 328-residue chain is MGPAGCAFTLLLLLGISVCGQPVYSSRVVGGQDAAAGRWPWQVSLHFDHNFICGGSLVSERLILTAAHCIQPTWTTFSYTVWLGSITVGDSRKRVKYYVSKIVIHPKYQDTTADVALLKLSSQVTFTSAILPICLPSVTKQLAIPPFCWVTGWGKVKESSDRDYHSALQEAEVPIIDRQACEQLYNPIGIFLPALEPVIKEDKICAGDTQNMKDSCKGDSGGPLSCHIDGVWIQTGVVSWGLECGKSLPGVYTNVIYYQKWINATISRANNLDFSDFLFPIVLLSLALLRPSCAFGPNTIHRVGTVAEAVACIQGWEENAWRFSPRGR.

A signal peptide spans 1–20 (MGPAGCAFTLLLLLGISVCG). Residues 28–267 (VVGGQDAAAG…YQKWINATIS (240 aa)) form the Peptidase S1 domain. A disulfide bond links Cys53 and Cys69. Catalysis depends on charge relay system residues His68 and Asp114. 3 disulfides stabilise this stretch: Cys148–Cys226, Cys181–Cys205, and Cys216–Cys244. Catalysis depends on Ser220, which acts as the Charge relay system. An N-linked (GlcNAc...) asparagine glycan is attached at Asn263.

The protein belongs to the peptidase S1 family.

The protein localises to the secreted. The chain is Serine protease 48 (PRSS48) from Homo sapiens (Human).